The primary structure comprises 149 residues: Ribonuclease pancreatic (149 aa).

An N-terminal signal peptide occupies residues 1–25 (MGLEKSLILFPLFVLLLGWVQPSLG). The interval 30-49 (AQKFERQHMDSSGSSNNSPT) is disordered. Residues Lys32 and Arg35 each contribute to the substrate site. The active-site Proton acceptor is His37. Positions 39-49 (DSSGSSNNSPT) are enriched in polar residues. 4 disulfides stabilise this stretch: Cys51/Cys109, Cys65/Cys120, Cys83/Cys135, and Cys90/Cys97. 66-70 (KPVNT) contributes to the substrate binding site. Asn87 carries an N-linked (GlcNAc...) asparagine glycan. A substrate-binding site is contributed by Lys91. Catalysis depends on His144, which acts as the Proton donor.

This sequence belongs to the pancreatic ribonuclease family. Monomer. Interacts with and forms tight 1:1 complexes with RNH1. Dimerization of two such complexes may occur. Interaction with RNH1 inhibits this protein. As to expression, pancreas.

It localises to the secreted. It carries out the reaction an [RNA] containing cytidine + H2O = an [RNA]-3'-cytidine-3'-phosphate + a 5'-hydroxy-ribonucleotide-3'-[RNA].. The catalysed reaction is an [RNA] containing uridine + H2O = an [RNA]-3'-uridine-3'-phosphate + a 5'-hydroxy-ribonucleotide-3'-[RNA].. Endonuclease that catalyzes the cleavage of RNA on the 3' side of pyrimidine nucleotides. Acts on single-stranded and double-stranded RNA. This is Ribonuclease pancreatic (Rnase1) from Mus pahari (Gairdner's shrew-mouse).